A 211-amino-acid polypeptide reads, in one-letter code: Uracil phosphoribosyltransferase (211 aa).

5-phospho-alpha-D-ribose 1-diphosphate is bound by residues Arg78, Arg103, and 130 to 138 (DPMLATGGT). Uracil is bound by residues Ile195 and 200–202 (GDA). 5-phospho-alpha-D-ribose 1-diphosphate is bound at residue Asp201.

It belongs to the UPRTase family. Requires Mg(2+) as cofactor.

The enzyme catalyses UMP + diphosphate = 5-phospho-alpha-D-ribose 1-diphosphate + uracil. It functions in the pathway pyrimidine metabolism; UMP biosynthesis via salvage pathway; UMP from uracil: step 1/1. Allosterically activated by GTP. Functionally, catalyzes the conversion of uracil and 5-phospho-alpha-D-ribose 1-diphosphate (PRPP) to UMP and diphosphate. In Streptomyces griseus subsp. griseus (strain JCM 4626 / CBS 651.72 / NBRC 13350 / KCC S-0626 / ISP 5235), this protein is Uracil phosphoribosyltransferase.